We begin with the raw amino-acid sequence, 122 residues long: Ribosome-binding factor A (122 aa).

It belongs to the RbfA family. Monomer. Binds 30S ribosomal subunits, but not 50S ribosomal subunits or 70S ribosomes.

The protein resides in the cytoplasm. Its function is as follows. One of several proteins that assist in the late maturation steps of the functional core of the 30S ribosomal subunit. Associates with free 30S ribosomal subunits (but not with 30S subunits that are part of 70S ribosomes or polysomes). Required for efficient processing of 16S rRNA. May interact with the 5'-terminal helix region of 16S rRNA. In Burkholderia thailandensis (strain ATCC 700388 / DSM 13276 / CCUG 48851 / CIP 106301 / E264), this protein is Ribosome-binding factor A.